The sequence spans 633 residues: RpoH suppressor (633 aa).

In terms of domain architecture, PNPLA spans 11–410; sequence LVMKGGITSG…SSNFPIHLFD (400 aa). 3 helical membrane passes run 38 to 58, 133 to 153, and 159 to 179; these read NIGGTSAGAIAAAACAAAAVG, IAPVETLLLLAALAGLAYAVG, and IAAALPAAICAYLGGVVFAVL. The GXSXG motif lies at 41-45; it reads GTSAG. Catalysis depends on Ser-43, which acts as the Nucleophile. Positions 342-380 are disordered; the sequence is ARRESLPGSDGENEAEDTTSDEDEQKTVLDSTEALTTGG. Over residues 352 to 365 the composition is skewed to acidic residues; it reads GENEAEDTTSDEDE. The active-site Proton acceptor is Asp-397. The DGA/G signature appears at 397–399; the sequence is DGG. The segment at 605 to 624 is disordered; that stretch reads EGEKWSGEGPDLTKTAPRPL.

It localises to the cell membrane. Functionally, this protein is non-essential for R.meliloti growth, but induces a heat-shock response in temperature-sensitive E.coli K165 by elevating levels of sigma 32 (mechanism unknown). The protein is RpoH suppressor (suhR) of Rhizobium meliloti (strain 1021) (Ensifer meliloti).